Here is a 433-residue protein sequence, read N- to C-terminus: D-amino acid dehydrogenase (433 aa).

Residue Val3–Tyr17 participates in FAD binding.

The protein belongs to the DadA oxidoreductase family. The cofactor is FAD.

The catalysed reaction is a D-alpha-amino acid + A + H2O = a 2-oxocarboxylate + AH2 + NH4(+). Its pathway is amino-acid degradation; D-alanine degradation; NH(3) and pyruvate from D-alanine: step 1/1. Functionally, oxidative deamination of D-amino acids. In Pseudomonas syringae pv. syringae (strain B728a), this protein is D-amino acid dehydrogenase.